Here is a 346-residue protein sequence, read N- to C-terminus: Phenylalanine--tRNA ligase alpha subunit (346 aa).

Mg(2+) is bound at residue glutamate 258.

This sequence belongs to the class-II aminoacyl-tRNA synthetase family. Phe-tRNA synthetase alpha subunit type 1 subfamily. As to quaternary structure, tetramer of two alpha and two beta subunits. It depends on Mg(2+) as a cofactor.

The protein resides in the cytoplasm. It catalyses the reaction tRNA(Phe) + L-phenylalanine + ATP = L-phenylalanyl-tRNA(Phe) + AMP + diphosphate + H(+). The polypeptide is Phenylalanine--tRNA ligase alpha subunit (Protochlamydia amoebophila (strain UWE25)).